We begin with the raw amino-acid sequence, 1384 residues long: CHD3-type chromatin-remodeling factor PICKLE (1384 aa).

At Ser-23 the chain carries Phosphoserine. The segment at 49 to 96 (ENACQACGESTNLVSCNTCTYAFHAKCLVPPLKDASVENWRCPECVSP) adopts a PHD-type zinc-finger fold. Chromo domains follow at residues 98–180 (NEID…NSED) and 190–249 (TTVD…RSKD). The Helicase ATP-binding domain occupies 285 to 471 (RFSWSKQTHV…FMLMHFLDAG (187 aa)). 298-305 (DEMGLGKT) is an ATP binding site. A Nuclear localization signal motif is present at residues 376-383 (KKKKSGQI). Positions 422-425 (DEGH) match the DEAH box motif. The Helicase C-terminal domain occupies 599 to 760 (LLDKMMVKLK…NINQEELDDI (162 aa)). Acidic residues predominate over residues 893-912 (AGLEDVSSDGDESYEAESTD). 4 disordered regions span residues 893 to 941 (AGLE…TPLM), 1122 to 1152 (GLQGQNGSGGSNPGAQTNQNPGSVITGNNNA), 1313 to 1344 (SDQSKSHEDDTKPDLNNVEMKDTAEETKPLRG), and 1365 to 1384 (VDVKMEEAKEEEKPKNMVVD). The segment covering 1138 to 1152 (TNQNPGSVITGNNNA) has biased composition (polar residues). 2 stretches are compositionally biased toward basic and acidic residues: residues 1316 to 1341 (SKSHEDDTKPDLNNVEMKDTAEETKP) and 1367 to 1384 (VKMEEAKEEEKPKNMVVD).

It belongs to the SNF2/RAD54 helicase family. In terms of assembly, interacts with TAF12B. Mostly expressed in tissue undergoing significant differentiation (meristems and primordia) such as young seedlings, influorescent tissue and young siliques, but not in endosperm and seed coat (at protein level). Levels decrease as organs age. Also present in trichomes.

Its subcellular location is the nucleus. Functionally, chromatin remodeling factor that represses the expression of embryonic trait genes (such as NFYB9/LEC1) upon and after seed germination and thus enables the developmental switch to post-germinative growth. Silences some MADS-box proteins such as PHE1 and PHE2. Plays a role during carpel differentiation. Regulates late processes in cytokinin signaling. This is CHD3-type chromatin-remodeling factor PICKLE (PKL) from Arabidopsis thaliana (Mouse-ear cress).